We begin with the raw amino-acid sequence, 317 residues long: Melanocyte-stimulating hormone receptor (317 aa).

Polar residues predominate over residues 1-20 (MPVQGSQRSLLGAVNSTPTA). A disordered region spans residues 1 to 23 (MPVQGSQRSLLGAVNSTPTATPH). Topologically, residues 1–37 (MPVQGSQRSLLGAVNSTPTATPHLRPAANQTGPQCLE) are extracellular. Asn-29 carries an N-linked (GlcNAc...) asparagine glycan. The chain crosses the membrane as a helical span at residues 38–63 (VSIPDGLFLCLGLVSLVENTLVVAAI). The Cytoplasmic portion of the chain corresponds to 64-72 (AKNRNLHSP). A helical transmembrane segment spans residues 73 to 93 (MYCFICCLALSDLLVSVSSVL). The Extracellular portion of the chain corresponds to 94–118 (ETAVLLLLGAGALAAQATVVQQLGN). A helical membrane pass occupies residues 119–140 (VIDVLLCSSMVSSLFFLGAIAM). Topologically, residues 141-163 (DRYISIFYALRYHSIVTLARARR) are cytoplasmic. Residues 164-183 (AIAAIWAASILSSTLFIAYC) traverse the membrane as a helical segment. Residues 184 to 191 (DRTAALLC) are Extracellular-facing. The chain crosses the membrane as a helical span at residues 192–211 (LVVFFLAMLVLMAVLYVHML). Over 212 to 240 (TQARQHAQGIARLHKRQRPVQQGWGLKGA) the chain is Cytoplasmic. Residues 241 to 266 (ATLTILLGVFFLCWGPFFLHLTLIAV) form a helical membrane-spanning segment. At 267-279 (CPQHPTCSCIFKN) the chain is on the extracellular side. Residues 280–300 (FRLFLALIVCNAIVDPLIYAF) form a helical membrane-spanning segment. The Cytoplasmic portion of the chain corresponds to 301–317 (RSQELRKTLKEVLLFFW).

Belongs to the G-protein coupled receptor 1 family. Interacts with MGRN1, but does not undergo MGRN1-mediated ubiquitination; this interaction competes with GNAS-binding and thus inhibits agonist-induced cAMP production. Interacts with OPN3; the interaction results in a decrease in MC1R-mediated cAMP signaling and ultimately a decrease in melanin production in melanocytes.

It localises to the cell membrane. Its function is as follows. Receptor for MSH (alpha, beta and gamma) and ACTH. The activity of this receptor is mediated by G proteins which activate adenylate cyclase. Mediates melanogenesis, the production of eumelanin (black/brown) and phaeomelanin (red/yellow), via regulation of cAMP signaling in melanocytes. This Lemur catta (Ring-tailed lemur) protein is Melanocyte-stimulating hormone receptor (MC1R).